Reading from the N-terminus, the 243-residue chain is Terpene cyclase paxB (243 aa).

A run of 7 helical transmembrane segments spans residues 23 to 43 (FVVG…YISF), 49 to 69 (GMSI…CLVF), 78 to 98 (GVFW…ITFS), 112 to 132 (ISLI…ALAL), 134 to 154 (IGPA…LSVG), 172 to 194 (LWAS…WMYW), and 205 to 225 (LVLW…ICFW).

It belongs to the paxB family.

Its subcellular location is the membrane. The protein operates within secondary metabolite biosynthesis. Its function is as follows. Terpene cyclase; part of the ATM2 gene cluster that mediates the biosynthesis of paxilline, a mycotoxin that acts as an inhibitor of mammalian maxi-K channels. PaxG, the geranylgeranyl diphosphate (GGPP) synthase is proposed to catalyze the first step in paxilline biosynthesis. Condensation of indole-3-glycerol phosphate with GGPP by paxC then forms 3-geranylgeranylindole (3-GGI), followed by epoxidation and cyclization of this intermediate (by paxM and paxB) to form paspaline. Paspaline is subsequently converted to 13-desoxypaxilline by paxP, the latter being then converted to paxilline by paxQ. Finally paxilline can be mono- and di-prenylated by paxD. The polypeptide is Terpene cyclase paxB (Penicillium paxilli).